The sequence spans 231 residues: Large ribosomal subunit protein uL1 (231 aa).

It belongs to the universal ribosomal protein uL1 family. In terms of assembly, part of the 50S ribosomal subunit.

Binds directly to 23S rRNA. The L1 stalk is quite mobile in the ribosome, and is involved in E site tRNA release. In terms of biological role, protein L1 is also a translational repressor protein, it controls the translation of the L11 operon by binding to its mRNA. The chain is Large ribosomal subunit protein uL1 from Acetivibrio thermocellus (strain ATCC 27405 / DSM 1237 / JCM 9322 / NBRC 103400 / NCIMB 10682 / NRRL B-4536 / VPI 7372) (Clostridium thermocellum).